The primary structure comprises 152 residues: Endoribonuclease YbeY (152 aa).

Residues His114, His118, and His124 each contribute to the Zn(2+) site.

Belongs to the endoribonuclease YbeY family. Zn(2+) is required as a cofactor.

Its subcellular location is the cytoplasm. Single strand-specific metallo-endoribonuclease involved in late-stage 70S ribosome quality control and in maturation of the 3' terminus of the 16S rRNA. The protein is Endoribonuclease YbeY of Wigglesworthia glossinidia brevipalpis.